Here is a 193-residue protein sequence, read N- to C-terminus: Adenylate kinase (193 aa).

10–18 lines the ATP pocket; sequence GVPGVGGTT.

Belongs to the archaeal adenylate kinase family. Monomer.

It is found in the cytoplasm. It catalyses the reaction AMP + ATP = 2 ADP. The polypeptide is Adenylate kinase (Methanococcus aeolicus (strain ATCC BAA-1280 / DSM 17508 / OCM 812 / Nankai-3)).